The sequence spans 146 residues: Large ribosomal subunit protein uL15 (146 aa).

Residues 1–56 (MGLRLNELSPGVGAKKTAQRRGRGIGSGLGKTGGRGVKGQKSRSGSSVRSGFEGGQ) form a disordered region. A compositionally biased stretch (gly residues) spans 24-37 (GIGSGLGKTGGRGV).

It belongs to the universal ribosomal protein uL15 family. Part of the 50S ribosomal subunit.

Its function is as follows. Binds to the 23S rRNA. This chain is Large ribosomal subunit protein uL15, found in Psychrobacter arcticus (strain DSM 17307 / VKM B-2377 / 273-4).